A 236-amino-acid polypeptide reads, in one-letter code: 2-C-methyl-D-erythritol 4-phosphate cytidylyltransferase (236 aa).

It belongs to the IspD/TarI cytidylyltransferase family. IspD subfamily. In terms of assembly, homodimer.

The catalysed reaction is 2-C-methyl-D-erythritol 4-phosphate + CTP + H(+) = 4-CDP-2-C-methyl-D-erythritol + diphosphate. It functions in the pathway isoprenoid biosynthesis; isopentenyl diphosphate biosynthesis via DXP pathway; isopentenyl diphosphate from 1-deoxy-D-xylulose 5-phosphate: step 2/6. In terms of biological role, catalyzes the formation of 4-diphosphocytidyl-2-C-methyl-D-erythritol from CTP and 2-C-methyl-D-erythritol 4-phosphate (MEP). In Klebsiella pneumoniae subsp. pneumoniae (strain ATCC 700721 / MGH 78578), this protein is 2-C-methyl-D-erythritol 4-phosphate cytidylyltransferase.